Here is a 662-residue protein sequence, read N- to C-terminus: UPF0313 protein CPE1196 (662 aa).

The Radical SAM core domain occupies 296 to 567 (AIEEVKFSLV…AMQRALLQFK (272 aa)). [4Fe-4S] cluster is bound by residues Cys310, Cys314, and Cys317. The segment at 597 to 662 (RDKNSFGKGN…QRGSKGKKRR (66 aa)) is disordered. A compositionally biased stretch (basic and acidic residues) spans 618–632 (NRNENSGRRESEDKK). Residues 633-644 (RSSHSKKQRGNK) are compositionally biased toward basic residues.

This sequence belongs to the UPF0313 family. The cofactor is [4Fe-4S] cluster.

The protein is UPF0313 protein CPE1196 of Clostridium perfringens (strain 13 / Type A).